The sequence spans 433 residues: Arabinooligosaccharide-binding protein (433 aa).

Residues 1 to 21 (MKKMTVCFLVLMMLLTLVIAG) form the signal peptide. C22 is lipidated: N-palmitoyl cysteine. The S-diacylglycerol cysteine moiety is linked to residue C22.

It belongs to the bacterial solute-binding protein 1 family. In terms of assembly, the complex is composed of two ATP-binding proteins (MsmX), two transmembrane proteins (AraP and AraQ) and a solute-binding protein (AraN).

The protein resides in the cell membrane. In terms of biological role, part of the ABC transporter complex AraNPQ involved in the uptake of arabinooligosaccharides. Transports alpha-1,5-arabinooligosaccharides, at least up to four L-arabinosyl units. AraN captures the substrate and delivers it to the two transmembrane components. The chain is Arabinooligosaccharide-binding protein from Bacillus subtilis (strain 168).